A 284-amino-acid polypeptide reads, in one-letter code: Bifunctional protein FolD (284 aa).

Residues 166-168 (GAS) and I232 each bind NADP(+).

It belongs to the tetrahydrofolate dehydrogenase/cyclohydrolase family. As to quaternary structure, homodimer.

The catalysed reaction is (6R)-5,10-methylene-5,6,7,8-tetrahydrofolate + NADP(+) = (6R)-5,10-methenyltetrahydrofolate + NADPH. It carries out the reaction (6R)-5,10-methenyltetrahydrofolate + H2O = (6R)-10-formyltetrahydrofolate + H(+). The protein operates within one-carbon metabolism; tetrahydrofolate interconversion. Functionally, catalyzes the oxidation of 5,10-methylenetetrahydrofolate to 5,10-methenyltetrahydrofolate and then the hydrolysis of 5,10-methenyltetrahydrofolate to 10-formyltetrahydrofolate. The sequence is that of Bifunctional protein FolD from Pseudomonas paraeruginosa (strain DSM 24068 / PA7) (Pseudomonas aeruginosa (strain PA7)).